The sequence spans 142 residues: Large ribosomal subunit protein uL13 (142 aa).

The protein belongs to the universal ribosomal protein uL13 family. As to quaternary structure, part of the 50S ribosomal subunit.

In terms of biological role, this protein is one of the early assembly proteins of the 50S ribosomal subunit, although it is not seen to bind rRNA by itself. It is important during the early stages of 50S assembly. The polypeptide is Large ribosomal subunit protein uL13 (Vibrio parahaemolyticus serotype O3:K6 (strain RIMD 2210633)).